The primary structure comprises 55 residues: Large ribosomal subunit protein bL33 (55 aa).

It belongs to the bacterial ribosomal protein bL33 family.

This chain is Large ribosomal subunit protein bL33, found in Azorhizobium caulinodans (strain ATCC 43989 / DSM 5975 / JCM 20966 / LMG 6465 / NBRC 14845 / NCIMB 13405 / ORS 571).